The sequence spans 325 residues: Olfactory receptor 5T18 (325 aa).

Residues methionine 1 to glutamine 22 lie on the Extracellular side of the membrane. Asparagine 3 carries N-linked (GlcNAc...) asparagine glycosylation. The next 2 helical transmembrane spans lie at isoleucine 23–leucine 43 and isoleucine 44–leucine 64. At serine 65–threonine 97 the chain is on the extracellular side. Cysteine 95 and cysteine 187 form a disulfide bridge. The chain crosses the membrane as a helical span at residues glutamine 98–tyrosine 118. Topologically, residues aspartate 119–tyrosine 139 are cytoplasmic. Residues isoleucine 140–alanine 160 form a helical membrane-spanning segment. Residues threonine 161–glutamate 194 lie on the Extracellular side of the membrane. Residues leucine 195–serine 215 traverse the membrane as a helical segment. The Cytoplasmic segment spans residues tyrosine 216–lysine 234. Residues valine 235 to phenylalanine 255 traverse the membrane as a helical segment. Over methionine 256–aspartate 269 the chain is Extracellular. The helical transmembrane segment at methionine 270–leucine 290 threads the bilayer. The Cytoplasmic segment spans residues arginine 291 to proline 325.

This sequence belongs to the G-protein coupled receptor 1 family.

It localises to the cell membrane. In terms of biological role, potential odorant receptor. This is Olfactory receptor 5T18 from Mus musculus (Mouse).